Here is a 199-residue protein sequence, read N- to C-terminus: Phosphatidylethanolamine N-methyltransferase (199 aa).

The Lumenal segment spans residues 2-12 (SWLLGYVDPTE). An intramembrane region (helical) is located at residues 13–33 (PSFVAAVLTIVFNPLFWNVVA). Over 34 to 45 (RWEQRTRKLSRA) the chain is Lumenal. The helical transmembrane segment at 46–66 (FGSPYLACYSLGSIILLLNIL) threads the bilayer. Topologically, residues 67 to 93 (RSHCFTQAMMSQPKMEGLDSHTIYFLG) are cytoplasmic. A helical transmembrane segment spans residues 94–114 (LALLGWGLVFVLSSFYALGFT). 98 to 100 (GWG) is an S-adenosyl-L-methionine binding site. Over 115 to 157 (GTFLGDYFGILKESRVTTFPFSVLDNPMYWGSTANYLGWALMH) the chain is Lumenal. The chain crosses the membrane as a helical span at residues 158–178 (ASPTGLLLTVLVALVYVVALL). Residues 179 to 199 (FEEPFTAEIYRRKATRLHKRS) are Cytoplasmic-facing. 180–181 (EE) is a binding site for S-adenosyl-L-methionine.

The protein belongs to the class VI-like SAM-binding methyltransferase superfamily. PEMT/PEM2 methyltransferase family. Expressed in liver (at protein level).

It localises to the endoplasmic reticulum membrane. It is found in the mitochondrion membrane. It carries out the reaction a 1,2-diacyl-sn-glycero-3-phosphoethanolamine + S-adenosyl-L-methionine = a 1,2-diacyl-sn-glycero-3-phospho-N-methylethanolamine + S-adenosyl-L-homocysteine + H(+). The catalysed reaction is a 1,2-diacyl-sn-glycero-3-phospho-N-methylethanolamine + S-adenosyl-L-methionine = a 1,2-diacyl-sn-glycero-3-phospho-N,N-dimethylethanolamine + S-adenosyl-L-homocysteine + H(+). The enzyme catalyses a 1,2-diacyl-sn-glycero-3-phospho-N,N-dimethylethanolamine + S-adenosyl-L-methionine = a 1,2-diacyl-sn-glycero-3-phosphocholine + S-adenosyl-L-homocysteine + H(+). It catalyses the reaction 1,2-di-(9Z-octadecenoyl)-sn-glycero-3-phosphoethanolamine + S-adenosyl-L-methionine = 1,2-di-(9Z-octadecenoyl)-sn-glycero-3-phospho-N-methylethanolamine + S-adenosyl-L-homocysteine + H(+). It carries out the reaction 1,2-di-(9Z-octadecenoyl)-sn-glycero-3-phospho-N-methylethanolamine + S-adenosyl-L-methionine = 1,2-di-(9Z-octadecenoyl)-sn-glycero-3-phospho-N,N-dimethylethanolamine + S-adenosyl-L-homocysteine + H(+). The catalysed reaction is 1,2-di-(9Z-octadecenoyl)-sn-glycero-3-phospho-N,N-dimethylethanolamine + S-adenosyl-L-methionine = 1,2-di-(9Z-octadecenoyl)-sn-glycero-3-phosphocholine + S-adenosyl-L-homocysteine + H(+). The enzyme catalyses 1,2-di-(9Z,12Z-octadecadienoyl)-sn-glycero-3-phosphoethanolamine + S-adenosyl-L-methionine = 1,2-di-(9Z,12Z-octadecadienoyl)-sn-glycero-3-phospho-N-methylethanolamine + S-adenosyl-L-homocysteine + H(+). It catalyses the reaction 1,2-di-(9Z,12Z-octadecadienoyl)-sn-glycero-3-phospho-N-methylethanolamine + S-adenosyl-L-methionine = 1,2-di-(9Z,12Z-octadecadienoyl)-sn-glycero-3-phospho-N,N-dimethylethanolamine + S-adenosyl-L-homocysteine + H(+). It carries out the reaction 1,2-di-(9Z,12Z-octadecadienoyl)-sn-glycero-3-phospho-N,N-dimethylethanolamine + S-adenosyl-L-methionine = 1,2-di-(9Z,12Z-octadecadienoyl)-sn-glycero-3-phosphocholine + S-adenosyl-L-homocysteine + H(+). The catalysed reaction is 1,2-di-(9Z,12Z,15Z-octadecatrienoyl)-sn-glycero-3-phosphoethanolamine + S-adenosyl-L-methionine = 1,2-di-(9Z,12Z,15Z-octadecatrienoyl)-sn-glycero-3-phospho-N-methylethanolamine + S-adenosyl-L-homocysteine + H(+). The enzyme catalyses 1,2-di-(9Z,12Z,15Z-octadecatrienoyl)-sn-glycero-3-phospho-N-methylethanolamine + S-adenosyl-L-methionine = 1,2-di-(9Z,12Z,15Z-octadecatrienoyl)-sn-glycero-3-phospho-N,N-dimethylethanolamine + S-adenosyl-L-homocysteine + H(+). It catalyses the reaction 1,2-di-(9Z,12Z,15Z-octadecatrienoyl)-sn-glycero-3-phospho-N,N-dimethylethanolamine + S-adenosyl-L-methionine = 1,2-di-(9Z,12Z,15Z-octadecatrienoyl)-sn-glycero-3-phosphocholine + S-adenosyl-L-homocysteine + H(+). It carries out the reaction 1-hexadecanoyl-2-(4Z,7Z,10Z,13Z,16Z,19Z-docosahexaenoyl)-sn-glycero-3-phosphoethanolamine + S-adenosyl-L-methionine = 1-hexadecanoyl-2-(4Z,7Z,10Z,13Z,16Z,19Z-docosahexaenoyl)-sn-glycero-3-phospho-N-methylethanolamine + S-adenosyl-L-homocysteine + H(+). The catalysed reaction is 1-hexadecanoyl-2-(4Z,7Z,10Z,13Z,16Z,19Z-docosahexaenoyl)-sn-glycero-3-phospho-N-methylethanolamine + S-adenosyl-L-methionine = 1-hexadecanoyl-2-(4Z,7Z,10Z,13Z,16Z,19Z-docosahexaenoyl)-sn-glycero-3-phospho-N,N-dimethylethanolamine + S-adenosyl-L-homocysteine + H(+). The enzyme catalyses 1-hexadecanoyl-2-(4Z,7Z,10Z,13Z,16Z,19Z-docosahexaenoyl)-sn-glycero-3-phospho-N,N-dimethylethanolamine + S-adenosyl-L-methionine = 1-hexadecanoyl-2-(4Z,7Z,10Z,13Z,16Z,19Z-docosahexaenoyl)-sn-glycero-3-phosphocholine + S-adenosyl-L-homocysteine + H(+). It functions in the pathway phospholipid metabolism; phosphatidylcholine biosynthesis. Functionally, catalyzes the three sequential steps of the methylation pathway for the biosynthesis of phosphatidylcholine, a critical and essential component for membrane structure. Uses S-adenosylmethionine (S-adenosyl-L-methionine, SAM or AdoMet) as the methyl group donor for the methylation of phosphatidylethanolamine (1,2-diacyl-sn-glycero-3-phosphoethanolamine, PE) to phosphatidylmonomethylethanolamine (1,2-diacyl-sn-glycero-3-phospho-N-methylethanolamine, PMME), PMME to phosphatidyldimethylethanolamine (1,2-diacyl-sn-glycero-3-phospho-N,N-dimethylethanolamine, PDME), and PDME to phosphatidylcholine (1,2-diacyl-sn-glycero-3-phosphocholine, PC), producing S-adenosyl-L-homocysteine in each step. In Rattus norvegicus (Rat), this protein is Phosphatidylethanolamine N-methyltransferase.